A 187-amino-acid chain; its full sequence is Large ribosomal subunit protein uL5 (187 aa).

This sequence belongs to the universal ribosomal protein uL5 family. As to quaternary structure, part of the 50S ribosomal subunit; part of the 5S rRNA/L5/L18/L25 subcomplex. Contacts the 5S rRNA and the P site tRNA. Forms a bridge to the 30S subunit in the 70S ribosome.

In terms of biological role, this is one of the proteins that bind and probably mediate the attachment of the 5S RNA into the large ribosomal subunit, where it forms part of the central protuberance. In the 70S ribosome it contacts protein S13 of the 30S subunit (bridge B1b), connecting the 2 subunits; this bridge is implicated in subunit movement. Contacts the P site tRNA; the 5S rRNA and some of its associated proteins might help stabilize positioning of ribosome-bound tRNAs. In Saccharopolyspora erythraea (strain ATCC 11635 / DSM 40517 / JCM 4748 / NBRC 13426 / NCIMB 8594 / NRRL 2338), this protein is Large ribosomal subunit protein uL5.